The sequence spans 1134 residues: DNA polymerase II large subunit (1134 aa).

Belongs to the archaeal DNA polymerase II family. In terms of assembly, heterodimer of a large subunit and a small subunit.

It carries out the reaction DNA(n) + a 2'-deoxyribonucleoside 5'-triphosphate = DNA(n+1) + diphosphate. It catalyses the reaction Exonucleolytic cleavage in the 3'- to 5'-direction to yield nucleoside 5'-phosphates.. Functionally, possesses two activities: a DNA synthesis (polymerase) and an exonucleolytic activity that degrades single-stranded DNA in the 3'- to 5'-direction. Has a template-primer preference which is characteristic of a replicative DNA polymerase. This is DNA polymerase II large subunit from Methanocella arvoryzae (strain DSM 22066 / NBRC 105507 / MRE50).